We begin with the raw amino-acid sequence, 496 residues long: Cytochrome P450 4ae1 (496 aa).

Residue Cys-443 participates in heme binding.

It belongs to the cytochrome P450 family. Heme serves as cofactor.

It is found in the endoplasmic reticulum membrane. The protein localises to the microsome membrane. Functionally, may be involved in the metabolism of insect hormones and in the breakdown of synthetic insecticides. This chain is Cytochrome P450 4ae1 (Cyp4ae1), found in Drosophila melanogaster (Fruit fly).